The following is a 306-amino-acid chain: Aquaporin-1 (306 aa).

A compositionally biased stretch (polar residues) spans 1 to 23 (MASTHSSLTTVQNNANNKSNRTL). A disordered region spans residues 1-24 (MASTHSSLTTVQNNANNKSNRTLN). At 1 to 59 (MASTHSSLTTVQNNANNKSNRTLNTERRLSMESSVFTLYNKAADELDTSQRSAFQACHR) the chain is on the cytoplasmic side. Residues 60–80 (EFLAEFIGTVILVLLTCGFCA) form a helical membrane-spanning segment. Topologically, residues 81-92 (EQTLHIEESKSW) are extracellular. A helical membrane pass occupies residues 93–113 (LTSSFGSGLSVLIGICVSGHV). Over 114–145 (SGAHLNPAVTIAFCIFSGFPIRKVPSYITAQL) the chain is Cytoplasmic. Residues 119–121 (NPA) carry the NPA 1 motif. The helical transmembrane segment at 146 to 166 (LGAFAGAALLYIIIEPAIVQF) threads the bilayer. The Extracellular segment spans residues 167–192 (DGGQRYILGEKSTAGIFGTYPPLYVG). Residues 193 to 213 (IGSAIASEIMGTAMLLLVIMV) traverse the membrane as a helical segment. Residues 214 to 226 (TGHPNNLPYKSAQ) are Cytoplasmic-facing. A helical transmembrane segment spans residues 227-247 (GAMIALGITTISLCIGYTSGF). The Extracellular segment spans residues 248–278 (SLNPARDFGPRLFTAIAGWGFDVFKVYHYYA). Residues 250–252 (NPA) carry the NPA 2 motif. Residues 279–299 (LVPMFAPILGGLVGLMLMMPF) traverse the membrane as a helical segment. Topologically, residues 300 to 306 (SFLSVRA) are cytoplasmic.

This sequence belongs to the MIP/aquaporin (TC 1.A.8) family.

The protein resides in the cell membrane. The enzyme catalyses H2O(in) = H2O(out). Water channel required to facilitate the transport of water across membranes. Contributes to water uptake of spores during the early stages of spore germination. Aquaporins AQP1 and AQP2 act as extracellular pH sensors and enable the spores to hydrate under favorable conditions and to commence germination. Wounded vegetables and fruit present acidic pH, so the optimal pH range for germination is adapted to the relevant host pH. The chain is Aquaporin-1 from Rhizopus delemar (strain RA 99-880 / ATCC MYA-4621 / FGSC 9543 / NRRL 43880) (Mucormycosis agent).